The sequence spans 341 residues: HTH-type transcriptional repressor PurR (341 aa).

Residues 2 to 56 (ATIKDVAKRANVSTTTVSHVINKTRFVAEETRNAVWAAIKELHYSPSAVARSLKV) form the HTH lacI-type domain. Positions 4–23 (IKDVAKRANVSTTTVSHVIN) form a DNA-binding region, H-T-H motif. The DNA-binding element occupies 48 to 56 (SAVARSLKV). Hypoxanthine contacts are provided by Tyr-73, Arg-190, Thr-192, Phe-221, and Asp-275.

As to quaternary structure, homodimer.

It participates in purine metabolism; purine nucleotide biosynthesis [regulation]. Is the main repressor of the genes involved in the de novo synthesis of purine nucleotides, regulating purB, purC, purEK, purF, purHD, purL, purMN and guaBA expression. In addition, it participates in the regulation or coregulation of genes involved in de novo pyrimidine nucleotide biosynthesis, salvage and uptake (pyrC, pyrD, carAB and codBA), and of several genes encoding enzymes necessary for nucleotide and polyamine biosynthesis (prsA, glyA, gcvTHP, speA, glnB). Binds to a 16-bp palindromic sequence located within the promoter region of pur regulon genes. The consensus binding sequence is 5'-ACGCAAACGTTTTCNT-3'. PurR is allosterically activated to bind its cognate DNA by binding the purine corepressors, hypoxanthine or guanine, thereby effecting transcription repression. The polypeptide is HTH-type transcriptional repressor PurR (purR) (Escherichia coli (strain K12)).